Reading from the N-terminus, the 42-residue chain is Photosystem I reaction center subunit IX (42 aa).

The helical transmembrane segment at 7–27 (YLSTAPVLATLWFGFLAGLLI) threads the bilayer.

This sequence belongs to the PsaJ family.

It is found in the plastid. The protein resides in the chloroplast thylakoid membrane. In terms of biological role, may help in the organization of the PsaE and PsaF subunits. This Anthoceros angustus (Hornwort) protein is Photosystem I reaction center subunit IX.